The sequence spans 1006 residues: Probable beta-galactosidase A (1006 aa).

Positions 1-18 (MKLLSVCAIALLAAQAAG) are cleaved as a signal peptide. The substrate site is built by Tyr96, Asn140, Ala141, and Glu142. Residue Asn156 is glycosylated (N-linked (GlcNAc...) asparagine). Asn199 is a binding site for substrate. Residue Glu200 is the Proton donor of the active site. Cys205 and Cys206 are disulfide-bonded. Tyr260 lines the substrate pocket. Cys266 and Cys315 are disulfide-bonded. The Nucleophile role is filled by Glu298. Substrate is bound at residue Tyr364. N-linked (GlcNAc...) asparagine glycans are attached at residues Asn373, Asn402, Asn422, Asn622, Asn760, Asn777, and Asn914.

This sequence belongs to the glycosyl hydrolase 35 family.

Its subcellular location is the secreted. The catalysed reaction is Hydrolysis of terminal non-reducing beta-D-galactose residues in beta-D-galactosides.. Cleaves beta-linked terminal galactosyl residues from gangliosides, glycoproteins, and glycosaminoglycans. The protein is Probable beta-galactosidase A (lacA) of Aspergillus fumigatus (strain CBS 144.89 / FGSC A1163 / CEA10) (Neosartorya fumigata).